Consider the following 362-residue polypeptide: Oxysterol-binding protein 5 (362 aa).

It belongs to the OSBP family.

In Dictyostelium discoideum (Social amoeba), this protein is Oxysterol-binding protein 5 (osbE).